A 702-amino-acid chain; its full sequence is p-hydroxybenzoic acid--AMP ligase FadD22 (702 aa).

A Carrier domain is found at 538 to 616 (ERHRLVLDAV…GLAQYLEAEL (79 aa)). Residue serine 576 is modified to O-(pantetheine 4'-phosphoryl)serine.

Belongs to the ATP-dependent AMP-binding enzyme family.

The enzyme catalyses holo-[4-hydroxyphenylalkanoate synthase] + 4-hydroxybenzoate + ATP = 4-hydroxyphenyl-[4-hydroxyphenylalkanoate synthase] + AMP + diphosphate. The protein operates within lipid metabolism; fatty acid biosynthesis. Its function is as follows. Catalyzes the adenylation of p-hydroxybenzoic acid (pHBA) to form p-hydroxybenzoic acid-AMP (pHBA-AMP), which is converted directly to p-hydroxybenzoyl-S-FadD22 (pHBA-S-FAdD22) thioester intermediate in a CoA-independent manner by attack of the phosphopantetheine thiol of FadD22. This intermediate primes the biosynthesis of the phenolphthiocerol (PPOL) by presenting the pHBA starter unit for elongation by Pks15/1. PPOL is an important intermediate in the biosynthesis of phenolic glycolipid (mycosid B). The polypeptide is p-hydroxybenzoic acid--AMP ligase FadD22 (fadD22) (Mycobacterium marinum (strain ATCC BAA-535 / M)).